We begin with the raw amino-acid sequence, 150 residues long: Arginine repressor (150 aa).

It belongs to the ArgR family.

It localises to the cytoplasm. The protein operates within amino-acid biosynthesis; L-arginine biosynthesis [regulation]. Functionally, regulates arginine biosynthesis genes. This Ruminiclostridium cellulolyticum (strain ATCC 35319 / DSM 5812 / JCM 6584 / H10) (Clostridium cellulolyticum) protein is Arginine repressor.